The sequence spans 232 residues: Large ribosomal subunit protein uL1 (232 aa).

Belongs to the universal ribosomal protein uL1 family. As to quaternary structure, part of the 50S ribosomal subunit.

Binds directly to 23S rRNA. The L1 stalk is quite mobile in the ribosome, and is involved in E site tRNA release. In terms of biological role, protein L1 is also a translational repressor protein, it controls the translation of the L11 operon by binding to its mRNA. This chain is Large ribosomal subunit protein uL1, found in Clostridium novyi (strain NT).